Consider the following 1072-residue polypeptide: MPKRLDINTILVIGSGPIVIGQAAEFDYSGTQACQSLKEEGYKVILVNSNPATIMTDTATADKVYIEPLTLEFVSRIIRKERPDAILPTLGGQTGLNMAVELAKSGVLEECGVEILGTKLSAIEQAEDRDLFRTLMQELNEPTPPSEIVHTLDEAYEFVKEIGYPVIVRPAFTLGGTGGGICHNEEELIEIVTSGLKHSPVTQCLLEKSIAGFKEIEYEVMRDANDNAIVVCNMENIDPVGVHTGDSIVVAPSQTLSDREYQMLRNTSLRIIRALGIEGGCNVQLALDPYSFQYYVIEVNPRVSRSSALASKATGYPIAKLAAKIAVGLTLDEIVNPVTQKTYACFEPALDYVVSKIPRWPFDKFESANRTLGTQMKATGEVMSIGRNLEESLLKAVRSLELGIYHLELNHLKELDKETMKKRIIKADDERLFIVAEAIRQGVTKEEIHEWCEMDFFFLQKIENIVNMERKVKANVGDMEVLREAKEMGFSDHYIASAWNKTECEIYATRKENGIMPVFKMVDTCAAEFESATPYYYSTYGDENESIVTERKSVMVLGSGPIRIGQGVEFDYATVHSVWAIKEAGYEAIIVNNNPETVSTDFSISDKLYFEPLTIEDVMHIIDLEKPEGVIVQFGGQTAINLAAKLAERGVKILGTSLEDLDRAEDRDKFEAALTELGIPQPVGKTATTVEQAVAIAEEIGYPVLVRPSYVLGGRAMEIVYRQEELLHYMKNAVKVHADHPVLIDRYMVGKEIEVDAISDGENVYIPGIMEHIERAGVHSGDSIGVYPPQSLSAKVKEQIIENTIALGRGLKIVGLLNIQFVVFKDEVYVIEVNPRASRTVPFLSKITGVPMANIATKVILGKNLVEQGYETGYHPEDNEVYVKAPVFSFAKLRSVDTTLGPEMKSTGEVMGKDLTLEKALYKGLVAAGISIPTHGSVIITVADKDKEEAIEIARRFHEIGYNLLATAGTAKSLTEQNIPVQVVNKIDSEDYNLLDIIRQGKAQFVINTLTKGKQPARDGFRIRRESVENGVACLTSLDTTRAILRVLESMTFSAHTMKEIAPTTRHEVVHA.

The tract at residues 1 to 401 (MPKRLDINTI…SLLKAVRSLE (401 aa)) is carboxyphosphate synthetic domain. The ATP site is built by arginine 129, arginine 169, glycine 175, glycine 176, lysine 208, isoleucine 210, glutamate 215, glycine 241, valine 242, histidine 243, glutamine 284, and glutamate 298. The region spanning 133 to 327 (RTLMQELNEP…IAKLAAKIAV (195 aa)) is the ATP-grasp 1 domain. 3 residues coordinate Mg(2+): glutamine 284, glutamate 298, and asparagine 300. Mn(2+) is bound by residues glutamine 284, glutamate 298, and asparagine 300. An oligomerization domain region spans residues 402-546 (LGIYHLELNH…YSTYGDENES (145 aa)). The tract at residues 547–929 (IVTERKSVMV…ALYKGLVAAG (383 aa)) is carbamoyl phosphate synthetic domain. Residues 671-861 (EAALTELGIP…MANIATKVIL (191 aa)) form the ATP-grasp 2 domain. 9 residues coordinate ATP: arginine 707, arginine 746, glutamate 752, glycine 777, valine 778, histidine 779, serine 780, glutamine 820, and glutamate 832. Residues glutamine 820, glutamate 832, and asparagine 834 each contribute to the Mg(2+) site. 3 residues coordinate Mn(2+): glutamine 820, glutamate 832, and asparagine 834. An MGS-like domain is found at 930–1072 (ISIPTHGSVI…PTTRHEVVHA (143 aa)). The allosteric domain stretch occupies residues 930-1072 (ISIPTHGSVI…PTTRHEVVHA (143 aa)).

Belongs to the CarB family. In terms of assembly, composed of two chains; the small (or glutamine) chain promotes the hydrolysis of glutamine to ammonia, which is used by the large (or ammonia) chain to synthesize carbamoyl phosphate. Tetramer of heterodimers (alpha,beta)4. Mg(2+) serves as cofactor. Requires Mn(2+) as cofactor.

It carries out the reaction hydrogencarbonate + L-glutamine + 2 ATP + H2O = carbamoyl phosphate + L-glutamate + 2 ADP + phosphate + 2 H(+). The enzyme catalyses hydrogencarbonate + NH4(+) + 2 ATP = carbamoyl phosphate + 2 ADP + phosphate + 2 H(+). Its pathway is amino-acid biosynthesis; L-arginine biosynthesis; carbamoyl phosphate from bicarbonate: step 1/1. It functions in the pathway pyrimidine metabolism; UMP biosynthesis via de novo pathway; (S)-dihydroorotate from bicarbonate: step 1/3. Large subunit of the glutamine-dependent carbamoyl phosphate synthetase (CPSase). CPSase catalyzes the formation of carbamoyl phosphate from the ammonia moiety of glutamine, carbonate, and phosphate donated by ATP, constituting the first step of 2 biosynthetic pathways, one leading to arginine and/or urea and the other to pyrimidine nucleotides. The large subunit (synthetase) binds the substrates ammonia (free or transferred from glutamine from the small subunit), hydrogencarbonate and ATP and carries out an ATP-coupled ligase reaction, activating hydrogencarbonate by forming carboxy phosphate which reacts with ammonia to form carbamoyl phosphate. The sequence is that of Carbamoyl phosphate synthase large chain from Bacillus cytotoxicus (strain DSM 22905 / CIP 110041 / 391-98 / NVH 391-98).